The sequence spans 292 residues: GTP cyclohydrolase FolE2 (292 aa).

The protein belongs to the GTP cyclohydrolase IV family.

It carries out the reaction GTP + H2O = 7,8-dihydroneopterin 3'-triphosphate + formate + H(+). Its pathway is cofactor biosynthesis; 7,8-dihydroneopterin triphosphate biosynthesis; 7,8-dihydroneopterin triphosphate from GTP: step 1/1. In terms of biological role, converts GTP to 7,8-dihydroneopterin triphosphate. The chain is GTP cyclohydrolase FolE2 from Staphylococcus saprophyticus subsp. saprophyticus (strain ATCC 15305 / DSM 20229 / NCIMB 8711 / NCTC 7292 / S-41).